Consider the following 439-residue polypeptide: Putative porin QuiX (439 aa).

The N-terminal stretch at 1-22 (MRHFFKLGLVSAAVLGSQMTLA) is a signal peptide.

The protein belongs to the OprB family.

It localises to the cell outer membrane. Could be involved in the transport of quinate or shikimate. In Acinetobacter baylyi (strain ATCC 33305 / BD413 / ADP1), this protein is Putative porin QuiX (quiX).